The primary structure comprises 312 residues: Bark storage protein A (312 aa).

The first 24 residues, 1–24 (MPQQSMQASLIDPIAEIERSNCKI), serve as a signal peptide directing secretion. The N-linked (GlcNAc...) asparagine glycan is linked to Asn-70.

The protein to wound-inducible poplar endochitinases. Monomer. Bark.

Its function is as follows. May play a role in nitrogen storage. The chain is Bark storage protein A (BSPA) from Populus deltoides (Eastern poplar).